A 691-amino-acid polypeptide reads, in one-letter code: Kinetochore protein NDC80 (691 aa).

Residues 1 to 95 (MQSSTSTDQH…LNDKSNSRNS (95 aa)) are disordered. Residues 10-19 (HVLHHMDPHR) are compositionally biased toward basic and acidic residues. Over residues 20-42 (FTSQIPTATSSQLRRRNSTNQGL) the composition is skewed to polar residues. Thr38 bears the Phosphothreonine mark. Residues 54 to 65 (TISGTGIPTGGI) are compositionally biased toward low complexity. At Thr248 the chain carries Phosphothreonine. Coiled-coil stretches lie at residues 376–446 (GKLE…SIKS) and 522–686 (KKSI…FETE).

It belongs to the NDC80/HEC1 family. In terms of assembly, component of the NDC80 complex, which consists of NDC80, NUF2, SPC24 and SPC25. The NDC80 complex is formed by two subcomplexes, NDC80-NUF2 and SPC24-SPC25, which are joined end-to-end through their coiled-coil domains. It has a rod-like structure with a length of 570 Angstroms and globular domains at either end. The NDC80-NUF2 globular domains are probably directed to microtubules, the SPC24-SPC25 globular domains to the centromere. NDC80 probably interacts with SMC1 and SMC2. Also interacts with KIN3. Interacts with DMC1.

It is found in the nucleus. Its subcellular location is the chromosome. It localises to the centromere. The protein localises to the kinetochore. Functionally, acts as a component of the essential kinetochore-associated NDC80 complex, which is involved in chromosome segregation and spindle checkpoint activity. This is Kinetochore protein NDC80 from Saccharomyces cerevisiae (strain ATCC 204508 / S288c) (Baker's yeast).